Reading from the N-terminus, the 100-residue chain is Pregnancy-associated protein bPAP (100 aa).

A disordered region spans residues 1–40 (DSELAGPRGARGPHGLSGPHGLSGLXGPXGYTGPIGMXGL). Low complexity predominate over residues 13 to 29 (PHGLSGPHGLSGLXGPX).

Detected at high levels in the urine of pregnant females (at protein level) and at far lower levels in the urine of nonpregnant females.

In Bos taurus (Bovine), this protein is Pregnancy-associated protein bPAP.